The following is a 180-amino-acid chain: Shikimate kinase (180 aa).

Residue 19-24 participates in ATP binding; the sequence is GAGKTT. Threonine 23 lines the Mg(2+) pocket. Residues aspartate 41, arginine 65, and glycine 87 each coordinate substrate. An ATP-binding site is contributed by arginine 125. Substrate is bound at residue arginine 144.

This sequence belongs to the shikimate kinase family. In terms of assembly, monomer. The cofactor is Mg(2+).

It localises to the cytoplasm. The catalysed reaction is shikimate + ATP = 3-phosphoshikimate + ADP + H(+). The protein operates within metabolic intermediate biosynthesis; chorismate biosynthesis; chorismate from D-erythrose 4-phosphate and phosphoenolpyruvate: step 5/7. Functionally, catalyzes the specific phosphorylation of the 3-hydroxyl group of shikimic acid using ATP as a cosubstrate. This is Shikimate kinase from Acinetobacter baylyi (strain ATCC 33305 / BD413 / ADP1).